The chain runs to 393 residues: MNSSYKSRVFNIISIIMVSMLILSLGAFANNNKAKADSHSKQLEINVKSDKVPQKVKDLAQQQFAGYAKALDKQSNAKTGKYELGEAFKIYKFNGEEDNSYYYPVIKDGKIVYTLTLSPKNKDDLNKSKEDMNYSVKISNFIAKDLDQIKDKNSNITVLTDEKGFYFEEDGKVRLVKATPLPGNVKEKESAKTVSAKLKQELKNTVTPTKVEENEAIQEDQVQYENTLKNFKIREQQFDNSWCAGFSMAALLNATKNTDTYNAHDIMRTLYPEVSEQDLPNCSTFPNQMIEYGKSQGRDIHYQEGVPSYEQVDQLTKDNVGIMILAQSVSQNPNDPHLGHALAVVGNAKINDQEKLIYWNPWDTELSIQDADSSLLHLSFNRDYNWYGSMIGY.

Positions M1 to A36 are cleaved as a signal peptide. The propeptide occupies D37–E219. Residues C243, H340, and N360 contribute to the active site.

Belongs to the peptidase C47 family. As to quaternary structure, in the cytoplasm, prematurely activated/folded SspB forms a stable non-covalent complex with SspC. Post-translationally, proteolytically cleaved by staphylococcal serine protease (SspA).

It is found in the secreted. Prematurely activated/folded staphopain B is inhibited by staphostatin B (SspC), which is probably required to protect staphylococcal cytoplasmic proteins from degradation by SspB. Its function is as follows. Cysteine protease that plays an important role in the inhibition of host innate immune response. Degrades host elastin, fibrogen, fibronectin and kininogen. Blocks phagocytosis of opsonised S.aureus by neutrophils and monocytes by inducing their death in a proteolytic activity-dependent manner. Decreases surface expression of the 'don't eat me' signal CD31 on neutrophils. Cleaves host galectin-3/LGALS3, thereby inhibiting the neutrophil-activating ability of the lectin. This Staphylococcus aureus (strain Mu50 / ATCC 700699) protein is Staphopain B (sspB).